The primary structure comprises 385 residues: GTP cyclohydrolase 1 type 2 homolog (385 aa).

A divalent metal cation contacts are provided by His-64, His-65, Asp-103, His-333, and Glu-337.

This sequence belongs to the GTP cyclohydrolase I type 2/NIF3 family. Homohexamer.

The polypeptide is GTP cyclohydrolase 1 type 2 homolog (Mycobacterium leprae (strain TN)).